Consider the following 1639-residue polypeptide: Merozoite surface protein 1 (1639 aa).

The N-terminal stretch at 1 to 19 (MKIIFFLCSFLFFIINTQC) is a signal peptide. 2 stretches are compositionally biased toward polar residues: residues 58–67 (SGTAVTTSTP) and 107–119 (NSRR…NSSD). 2 disordered regions span residues 58–78 (SGTA…SGGS) and 94–122 (VASG…DSDA). N-linked (GlcNAc...) asparagine glycans are attached at residues Asn116 and Asn268. Positions 689 to 764 (KKNIKTEGQS…VPTPPAPVNN (76 aa)) are disordered. 2 stretches are compositionally biased toward polar residues: residues 694 to 704 (TEGQSDNSEPS) and 711 to 722 (GQATTKPGQQAG). Residues 730 to 741 (VQAQAQEQKQAQ) show a composition bias toward low complexity. N-linked (GlcNAc...) asparagine glycans are attached at residues Asn764, Asn768, Asn783, and Asn844. Residues 893–915 (SMQPLSLTPQDKPEVSANDDTSH) form a disordered region. Asn920, Asn964, Asn1058, Asn1165, and Asn1174 each carry an N-linked (GlcNAc...) asparagine glycan. The tract at residues 1002–1116 (QLSFDLYNKY…EESIQTEDNY (115 aa)) is required for binding to host erythrocyte cell membrane. Over residues 1199-1212 (VSESGSDTLEQSQP) the composition is skewed to polar residues. The disordered stretch occupies residues 1199 to 1229 (VSESGSDTLEQSQPKKPASTHVGAESNTITT). N-linked (GlcNAc...) asparagine glycosylation is found at Asn1445 and Asn1526. 2 consecutive EGF-like domains span residues 1530 to 1570 (HQCV…VENP) and 1571 to 1618 (NPTC…IFCS). 6 cysteine pairs are disulfide-bonded: Cys1532–Cys1543, Cys1537–Cys1553, Cys1555–Cys1566, Cys1574–Cys1587, Cys1581–Cys1601, and Cys1603–Cys1617. Residue Ser1618 is the site of GPI-anchor amidated serine attachment. A propeptide spans 1619–1639 (SSNFLGISFLLILMLILYSFI) (removed in mature form).

Forms a complex composed of subunits p83, p30, p38, and p42 which remain non-covalently associated; the complex is formed at the merozoite surface prior to egress from host erythrocytes. Forms a complex composed of processed MSP1 subunits, MSP6 subunit p36 and MSP7; the complex is formed at the merozoite surface prior to egress from host erythrocytes. Within the complex, interacts (via subunit p38) with MSP6 subunit p36 and (via subunits p83, p30 and p38) with MSP7 (via subunit p22). Forms a complex composed of MSP1, MSP6, DBLMSP1 and DBLMSP2. Within the complex, interacts (via subunit p38) with DBLMSP1 and DBLMSP2. Forms a complex composed of MSP1, and rhoptry proteins RhopH3, RAP1 and CLAG9/RhopH3. Within the complex, interacts (via subunits p42 and p19) with RhopH3 (via C-terminus). Forms a complex composed of MSP1, MSP6, MSP7, MSP9 and MSP3; within the complex, MSP6 and MSP9 mediate the binding to the host erythrocyte. Interacts (via subunits p19 and p42) with MSP9; the interaction is direct; MSP1 subunits p19 or p42, and MSP9 form a co-ligand complex that interacts with host SLC4A1/Band 3 protein. May interact with PFD6. Interacts with host spectrin. In terms of assembly, interacts with host glycophorin GYPA in a sialic acid-independent manner. As to quaternary structure, interacts with host proinflammatory cytokine S100P; the interaction blocks S100P inflammatory and chemotactic activities. Interacts with host SLC4A1/Band 3 (via 5ABC region) on the host erythrocyte surface in a sialic acid-independent manner. Post-translationally, the p190 precursor is cleaved by SUB1 prior to merozoite egress into 4 subunits p83, p30, p38, and p42 which remain non-covalently associated. SUB1-mediated proteolytic cleavage occurs in an orderly manner; the first cleavage occurs at the p83/p30 site, followed by cleavage at the p30/p38 site, the last cleavage occurs at the p38/p42 site. The order of cleavage is essential for parasite viability. SUB1-mediated processing is essential for merozoite egress. In a second processing step during erythrocyte invasion, p42 is cleaved by SUB2 into p33 and p19; the latter remains attached to the merozoite surface via its GPI-anchor and stays on the surface during the subsequent ring stage.

The protein localises to the cell membrane. The protein resides in the secreted. It is found in the vacuole membrane. Functionally, during the asexual blood stage, involved in merozoite egress from host erythrocytes possibly via its interaction with the host cytoskeleton protein spectrin resulting in the destabilization of the host cytoskeleton and thus leading to erythrocyte cell membrane rupture. Involved in the binding to host erythrocytes and is required for host erythrocyte invasion. Its function is as follows. By binding to host proinflammatory cytokine S100P may interfere with host immune responses. Involved in merozoite invasion of host erythrocytes. May play a role in the biogenesis and/or function of the food vacuole during the intraerythrocytic development. The chain is Merozoite surface protein 1 from Plasmodium falciparum (isolate Wellcome).